A 72-amino-acid chain; its full sequence is Translation initiation factor IF-1 (72 aa).

An S1-like domain is found at 1 to 72 (MAKEDCIEME…TKGRIKFRSK (72 aa)).

This sequence belongs to the IF-1 family. As to quaternary structure, component of the 30S ribosomal translation pre-initiation complex which assembles on the 30S ribosome in the order IF-2 and IF-3, IF-1 and N-formylmethionyl-tRNA(fMet); mRNA recruitment can occur at any time during PIC assembly.

Its subcellular location is the cytoplasm. One of the essential components for the initiation of protein synthesis. Stabilizes the binding of IF-2 and IF-3 on the 30S subunit to which N-formylmethionyl-tRNA(fMet) subsequently binds. Helps modulate mRNA selection, yielding the 30S pre-initiation complex (PIC). Upon addition of the 50S ribosomal subunit IF-1, IF-2 and IF-3 are released leaving the mature 70S translation initiation complex. This Francisella tularensis subsp. novicida (strain U112) protein is Translation initiation factor IF-1.